We begin with the raw amino-acid sequence, 470 residues long: Glutathione reductase (470 aa).

FAD-binding residues include serine 16 and glycine 17. Residue serine 16 participates in glutathione binding. Arginine 23 contacts glutathione. Glutamate 36, threonine 43, cysteine 44, and lysine 52 together coordinate FAD. Cysteine 44 and cysteine 49 are oxidised to a cystine. Position 104 (tyrosine 104) interacts with glutathione. An FAD-binding site is contributed by alanine 120. NADP(+) is bound by residues glycine 190, isoleucine 193, glutamate 196, arginine 213, and arginine 219. Residue threonine 228 participates in glutathione binding. Glycine 280 provides a ligand contact to NADP(+). Residue aspartate 321 participates in FAD binding. Glutamate 327 is a binding site for NADP(+). FAD is bound at residue threonine 329. Residue arginine 337 participates in glutathione binding. Residue alanine 362 participates in NADP(+) binding. Lysine 412 serves as a coordination point for glutathione. Residue histidine 459 coordinates FAD. Histidine 459 functions as the Proton acceptor in the catalytic mechanism.

This sequence belongs to the class-I pyridine nucleotide-disulfide oxidoreductase family. In terms of assembly, homodimer. FAD is required as a cofactor.

The protein localises to the cytoplasm. It localises to the mitochondrion. The enzyme catalyses 2 glutathione + NADP(+) = glutathione disulfide + NADPH + H(+). Its function is as follows. Catalyzes the reduction of glutathione disulfide (GSSG) to reduced glutathione (GSH). Constitutes the major mechanism to maintain a high GSH:GSSG ratio in the cytosol. The polypeptide is Glutathione reductase (GLR1) (Yarrowia lipolytica (strain CLIB 122 / E 150) (Yeast)).